The primary structure comprises 632 residues: DNA topoisomerase 4 subunit B (632 aa).

Residues Tyr5, Asn42, Asp69, 110 to 116 (GLHGVGI), and Lys334 each bind ATP. The region spanning 412 to 525 (TELFLVEGDS…DGHVYVAMPP (114 aa)) is the Toprim domain. Residues Glu418, Asp490, and Asp492 each coordinate Mg(2+).

Belongs to the type II topoisomerase family. ParE type 1 subfamily. Heterotetramer composed of ParC and ParE. The cofactor is Mg(2+). Mn(2+) is required as a cofactor. It depends on Ca(2+) as a cofactor.

It carries out the reaction ATP-dependent breakage, passage and rejoining of double-stranded DNA.. In terms of biological role, topoisomerase IV is essential for chromosome segregation. It relaxes supercoiled DNA. Performs the decatenation events required during the replication of a circular DNA molecule. The polypeptide is DNA topoisomerase 4 subunit B (Haemophilus influenzae (strain ATCC 51907 / DSM 11121 / KW20 / Rd)).